Reading from the N-terminus, the 149-residue chain is General odorant-binding protein 57c (149 aa).

The first 16 residues, M1–S16, serve as a signal peptide directing secretion. 3 cysteine pairs are disulfide-bonded: C32–C70, C66–C117, and C106–C126.

The protein belongs to the PBP/GOBP family.

Functionally, present in the aqueous fluid surrounding olfactory sensory dendrites and are thought to aid in the capture and transport of hydrophobic odorants into and through this fluid. The polypeptide is General odorant-binding protein 57c (Drosophila melanogaster (Fruit fly)).